We begin with the raw amino-acid sequence, 35 residues long: KKYSCLEGETHKLKPSPEPNMQECTLYSGSSCCYA.

C5 and C32 form a disulfide bridge.

It belongs to the folate receptor family.

Required for the transport of riboflavin to the developing oocyte. In Struthio camelus (Common ostrich), this protein is Riboflavin-binding protein.